A 374-amino-acid chain; its full sequence is Aclacinomycin 10-hydroxylase RdmB (374 aa).

S-adenosyl-L-methionine contacts are provided by Tyr-171, Gly-190, Glu-213, Asp-240, Phe-241, and Ser-255.

This sequence belongs to the class I-like SAM-binding methyltransferase superfamily. Cation-independent O-methyltransferase family. In terms of assembly, homodimer. Homotetramer in solution. Tetramers might not be very stable in solution.

The catalysed reaction is 15-demethylaclacinomycin T + AH2 + O2 = 10-decarboxymethylaclacinomycin T + A + CO2 + H2O. It carries out the reaction 10-carboxy-13-deoxycarminomycin + AH2 + O2 + H(+) = 10-hydroxy-13-deoxycarminomycin + A + CO2 + H2O. The enzyme catalyses 10-hydroxy-13-deoxycarminomycin + S-adenosyl-L-methionine = 10-hydroxy-13-deoxydaunorubicin + S-adenosyl-L-homocysteine + H(+). The protein operates within antibiotic biosynthesis; rhodomycin biosynthesis. It participates in antibiotic biosynthesis; aclacinomycin biosynthesis. The hydroxylation reaction requires S-adenosyl-L-methionine (SAM) as a cofactor. S-adenosine-L-homocysteine and sinefungin (a SAM analog) can also support the decarboxylative hydroxylation activity with 10-carboxy-13-deoxycarminomycin as substrate. SAM and its analogs are considered an essential structural ligand to maintain ternary structural integrity and the proper binding mode and orientation of electron-rich substrates during decarboxylative hydroxylation of C-10 by RdmB. In terms of biological role, involved in the biosynthesis of anthracyclines, an important group of aromatic polyketide antibiotics used in cancer chemotherapy. Acts as a 10-hydroxylase to catalyze a decarboxylative hydroxylation reaction on anthracyclines. During biosynthesis of rhodomycin, it catalyzes the removal of the carboxylic group at the C-10 position of 15-demethoxy-epsilon-rhodomycin coupled to hydroxylation at the same C-10 position to yield beta-rhodomycin. In vitro, can also catalyze the removal of the carboxylic group at the C-10 position of 15-demethoxyaclacinomycin T coupled to hydroxylation at the same C-10 position to yield 10-decarboxymethylaclacinomycin T. It can also use 10-carboxy-13-deoxycarminomycin, an analog of 15-demethoxy-epsilon-rhodomycin, to yield 10-hydroxy-13-deoxycarminomycin. In addition to its hydroxylation activity, it can act in vitro as a S-adenosyl-L-methionine-dependent O-methyltransferase and catalyze the 4-O-methylation of 10-hydroxy-13-deoxycarminomycin to 10-hydroxy-13-deoxydaunorubicin. The triglycosyl group of anthracyclines prevents the methylation reaction. This Streptomyces purpurascens protein is Aclacinomycin 10-hydroxylase RdmB.